The following is a 120-amino-acid chain: Eukaryotic translation initiation factor 4E-binding protein 2 (120 aa).

Phosphothreonine; by MTOR is present on residues Thr-37 and Thr-46. Residues 54 to 60 carry the YXXXXLphi motif motif; sequence YDRKFLL. The residue at position 65 (Ser-65) is a Phosphoserine; by MTOR. A Phosphothreonine; by MTOR modification is found at Thr-70. At Ser-83 the chain carries Phosphoserine. 2 positions are modified to deamidated asparagine: Asn-99 and Asn-102. The TOS motif motif lies at 116–120; it reads FEMDI.

Belongs to the eIF4E-binding protein family. Hypophosphorylated EIF4EBP2 interacts with EIF4E; phosphorylation of EIF4EBP2 by mTORC1 causes dissociation of the complex allowing EIF4G1/EIF4G3 to bind and consequent initiation of translation. Interacts (via TOS motif) with RPTOR; promoting phosphorylation by mTORC1. Interacts with PCMT1; required to prevent isoaspartate accumulation and convert isoaspartate to Asp. Phosphorylation at Thr-37, Thr-46, Ser-65, Thr-70 and Ser-83 is mediated by MTOR and corresponds to the hyperphosphorylated form: it abolishes binding to EIF4E by inducing folding of intrinsically disordered regions. First phosphorylated at Thr-37 and Thr-46 by MTOR, inducing folding of region encompassing residues from Pro-18 to Arg-62 of into a four-stranded beta-domain that sequesters the helical YXXXXLPhi motif into a partly buried beta-strand, blocking accessibility to EIF4E. Protein phosphorylated at Thr-37 and Thr-46 is however unstable and subsequent phosphorylation at Ser-65, Thr-70 and Ser-83 is required to stabilize the fold, decreasing affinity for EIF4E by a factor of 4000. Phosphorylated in response to insulin, EGF and PDGF. Post-translationally, deamidated at Asn-99 and Asn-102 to aspartate (Asp) in brain. Deamidation promotes interaction with RPTOR, subsequent phosphorylation by mTORC1 and increased translation, leading to impair kinetics of excitatory synaptic transmission. Deamidation takes place during postnatal development, when the PI3K-Akt-mTOR signaling is reduced, suggesting it acts as a compensatory mechanism to promote translation despite attenuated PI3K-Akt-mTOR signaling in neuron development. Deamidation converts Asn residues into a mixture of Asp and isoaspartate; interactions with PCMT1 is required to prevent isoaspartate accumulation and convert isoaspartate to Asp. In terms of tissue distribution, enriched in brain.

Its subcellular location is the cytoplasm. The protein resides in the nucleus. In terms of biological role, repressor of translation initiation involved in synaptic plasticity, learning and memory formation. Regulates EIF4E activity by preventing its assembly into the eIF4F complex: hypophosphorylated form of EIF4EBP2 competes with EIF4G1/EIF4G3 and strongly binds to EIF4E, leading to repress translation. In contrast, hyperphosphorylated form dissociates from EIF4E, allowing interaction between EIF4G1/EIF4G3 and EIF4E, leading to initiation of translation. EIF4EBP2 is enriched in brain and acts as a regulator of synapse activity and neuronal stem cell renewal via its ability to repress translation initiation. Mediates the regulation of protein translation by hormones, growth factors and other stimuli that signal through the MAP kinase and mTORC1 pathways. In Mus musculus (Mouse), this protein is Eukaryotic translation initiation factor 4E-binding protein 2.